The chain runs to 1032 residues: Toll-like receptor 9 (1032 aa).

Residues 1 to 25 form the signal peptide; the sequence is MGFCRSALHPLSLLVQAIMLAMTLA. Topologically, residues 26–818 are extracellular; it reads LGTLPAFLPC…CLDEALSWDC (793 aa). Cysteines 35 and 45 form a disulfide. 47 to 51 contributes to the DNA binding site; it reads WLFLK. LRR repeat units follow at residues 62-85, 87-110, 122-147, 150-166, 167-190, 198-221, 223-242, 243-268, 283-306, 308-332, 333-356, 363-386, 390-413, and 415-440; these read RGNVTSLSLSSNRIHHLHDSDFAH, PSLRHLNLKWNCPPVGLSPMHFPC, VPTLEELNLSYNNIMTVPALPKSLIS, LSHTNILMLDSASLAGL, HALRFLFMDGNCYYKNPCRQALEV, LGNLTHLSLKYNNLTVVPRNLPSS, EYLLLSYNRIVKLAPEDLAN, LTALRVLDVGGNCRRCDHAPNPCMEC, LSRLEGLVLKDSSLSWLNASWFRG, GNLRVLDLSENFLYKCITKTKAFQG, LTQLRKLNLSFNYQKRVSFAHLSL, LVALKELDMHGIFFRSLDETTLRP, LPMLQTLRLQMNFINQAQLGIFRA, and PGLRYVDLSDNRISGASELTATMGEA. The N-linked (GlcNAc...) asparagine glycan is linked to Asn-64. DNA contacts are provided by residues 72-77 and 95-109; these read SNRIHH and KWNCPPVGLSPMHFP. An intrachain disulfide couples Cys-98 to Cys-110. N-linked (GlcNAc...) asparagine glycosylation is present at Asn-129. Residue Tyr-132 coordinates DNA. Cys-178 and Cys-184 are disulfide-bonded. 179 to 181 serves as a coordination point for DNA; sequence YYK. N-linked (GlcNAc...) asparagine glycosylation occurs at Asn-200. Tyr-208 lines the DNA pocket. 2 N-linked (GlcNAc...) asparagine glycosylation sites follow: Asn-210 and Asn-242. Cystine bridges form between Cys-255–Cys-268 and Cys-258–Cys-265. S-palmitoyl cysteine attachment occurs at residues Cys-258 and Cys-265. N-linked (GlcNAc...) asparagine glycosylation is present at Asn-300. The N-linked (GlcNAc...) asparagine glycan is linked to Asn-340. N-linked (GlcNAc...) asparagine glycans are attached at residues Asn-469, Asn-474, and Asn-513. LRR repeat units follow at residues 470-494, 496-519, 520-543, 545-572, 574-598, 600-622, 627-650, 652-675, 676-699, 701-723, 724-747, and 749-772; these read CSTLNFTLDLSRNNLVTVQPEMFAQ, SHLQCLRLSHNCISQAVNGSQFLP, LTGLQVLDLSHNKLDLYHEHSFTE, PRLEALDLSYNSQPFGMQGVGHNFSFVA, LRTLRHLSLAHNNIHSQVSQQLCST, LRALDFSGNALGHMWAEGDLYLH, LSGLIWLDLSQNRLHTLLPQTLRN, PKSLQVLRLRDNYLAFFKWWSLHF, LPKLEVLDLAGNQLKALTNGSLPA, TRLRRLDVSCNSISFVAPGFFSK, AKELRELNLSANALKTVDHSWFGP, and ASALQILDVSANPLHCACGAAFMD. Cys-470 and Cys-500 are disulfide-bonded. Residue Asn-567 is glycosylated (N-linked (GlcNAc...) asparagine). Residue Asn-694 is glycosylated (N-linked (GlcNAc...) asparagine). An N-linked (GlcNAc...) asparagine glycan is attached at Asn-731. 2 disulfides stabilise this stretch: Cys-764-Cys-790 and Cys-766-Cys-809. A helical membrane pass occupies residues 819–839; that stretch reads FALSLLAVALGLGVPMLHHLC. The Cytoplasmic segment spans residues 840 to 1032; sequence GWDLWYCFHL…RNFCQGPTAE (193 aa). Positions 868 to 1013 constitute a TIR domain; the sequence is LPYDAFVVFD…SFWAQLGMAL (146 aa).

It belongs to the Toll-like receptor family. In terms of assembly, monomer and homodimer. Exists as a monomer in the absence of unmethylated cytidine-phosphate-guanosine (CpG) ligand. Proteolytic processing of an insertion loop (Z-loop) is required for homodimerization upon binding to the unmethylated CpG ligand leading to its activation. Interacts with MYD88 via their respective TIR domains. Interacts with BTK. Interacts (via transmembrane domain) with UNC93B1. Interacts with CD300LH; the interaction may promote full activation of TLR9-triggered innate responses. Interacts with CNPY3 and HSP90B1; this interaction is required for proper folding in the endoplasmic reticulum. Interacts with SMPDL3B. Interacts with CD82; this interaction is essential for TLR9-dependent myddosome formation in response to CpG stimulation. Post-translationally, activated by proteolytic cleavage of the flexible loop between repeats LRR14 and LRR15 within the ectodomain. Cleavage requires UNC93B1. Proteolytically processed by first removing the majority of the ectodomain by either asparagine endopeptidase (AEP) or a cathepsin followed by a trimming event that is solely cathepsin mediated and required for optimal receptor signaling. Palmitoylated by ZDHHC3 in the Golgi regulates TLR9 trafficking from the Golgi to endosomes. Depalmitoylation by PPT1 controls the release of TLR9 from UNC93B1 in endosomes. In terms of tissue distribution, highly expressed in spleen, lymph node, tonsil and peripheral blood leukocytes, especially in plasmacytoid pre-dendritic cells. Levels are much lower in monocytes and CD11c+ immature dendritic cells. Also detected in lung and liver.

It is found in the endoplasmic reticulum membrane. Its subcellular location is the early endosome membrane. It localises to the lysosome. The protein resides in the cytoplasmic vesicle. The protein localises to the phagosome. It is found in the golgi apparatus membrane. In terms of biological role, key component of innate and adaptive immunity. TLRs (Toll-like receptors) control host immune response against pathogens through recognition of molecular patterns specific to microorganisms. TLR9 is a nucleotide-sensing TLR which is activated by unmethylated cytidine-phosphate-guanosine (CpG) dinucleotides. Acts via MYD88 and TRAF6, leading to NF-kappa-B activation, cytokine secretion and the inflammatory response. Controls lymphocyte response to Helicobacter infection. Upon CpG stimulation, induces B-cell proliferation, activation, survival and antibody production. This Homo sapiens (Human) protein is Toll-like receptor 9 (TLR9).